Reading from the N-terminus, the 55-residue chain is U2-theraphotoxin-Cg1a (55 aa).

Positions 1-19 (DSPAWLKSMERIFQSEERE) are excised as a propeptide. Intrachain disulfides connect Cys20–Cys34, Cys27–Cys39, and Cys33–Cys47.

Belongs to the neurotoxin 10 (Hwtx-1) family. 06 (F4b) subfamily. In terms of tissue distribution, expressed by the venom gland.

Its subcellular location is the secreted. Probable ion channel inhibitor. The protein is U2-theraphotoxin-Cg1a of Chilobrachys guangxiensis (Chinese earth tiger tarantula).